We begin with the raw amino-acid sequence, 1347 residues long: G-protein coupled receptor-associated sorting protein 1 (1347 aa).

3 disordered regions span residues 1 to 75 (MTRA…AYAK), 145 to 174 (ESIP…SWYR), and 188 to 281 (DFKW…NSRS). Residues 21–33 (ENANAAEVEPEAP) are compositionally biased toward low complexity. A compositionally biased stretch (basic residues) spans 211–226 (FRPRKSMKANNRFRHM). A compositionally biased stretch (basic and acidic residues) spans 263 to 278 (PKDKTKVWSKPKEEPN). Ser-295 carries the phosphoserine modification. Disordered regions lie at residues 310 to 344 (GEEA…AMSG), 364 to 396 (FSKS…QEAR), and 460 to 485 (QVSS…SKSM). Over residues 316-325 (RSKPRARKGV) the composition is skewed to basic residues. Residues 370-396 (KKEPRTRAVPKEEVKTKARASTKQEAR) show a composition bias toward basic and acidic residues. Polar residues predominate over residues 461-484 (VSSFCLGSGKKSSMESGPKATSKS). Residues Ser-619 and Ser-626 each carry the phosphoserine modification. At Thr-860 the chain carries Phosphothreonine. Position 862 is a phosphoserine (Ser-862).

It belongs to the GPRASP family. Interacts with cytoplasmic tails of a variety of G-protein coupled receptors such as delta opioid receptor/OPRD1, beta-2 adrenergic receptor/ADRB2 and D4 dopamine receptor/DRD4 as well as D2 dopamine receptor/DRD2. Interacts with PER1. Interacts with BECN2; the interaction is direct. In terms of tissue distribution, expressed in the brain, with higher expression in the hippocampus, hypothalamus and olfactory bulb.

The protein resides in the cytoplasm. Functionally, modulates lysosomal sorting and functional down-regulation of a variety of G-protein coupled receptors. Targets receptors for degradation in lysosomes via its interaction with BECN2. In Mus musculus (Mouse), this protein is G-protein coupled receptor-associated sorting protein 1 (Gprasp1).